Consider the following 732-residue polypeptide: Coagulation factor XIII A chain (732 aa).

Residues 1-26 (MSDTPASTFGGRRAVPPNNSNAAEVD) form a disordered region. Position 2 is an N-acetylserine (serine 2). The propeptide at 2-38 (SDTPASTFGGRRAVPPNNSNAAEVDLPTEELQGLVPR) is activation peptide. Catalysis depends on residues cysteine 315, histidine 374, and aspartate 397. The Ca(2+) site is built by asparagine 437, aspartate 439, glutamate 486, and glutamate 491. Asparagine 614 is a glycosylation site (N-linked (GlcNAc...) asparagine).

Belongs to the transglutaminase superfamily. Transglutaminase family. In terms of assembly, tetramer of two A chains (F13A1) and two B (F13B) chains. Ca(2+) is required as a cofactor. The activation peptide is released by thrombin.

It is found in the cytoplasm. Its subcellular location is the secreted. It carries out the reaction L-glutaminyl-[protein] + L-lysyl-[protein] = [protein]-L-lysyl-N(6)-5-L-glutamyl-[protein] + NH4(+). Its function is as follows. Factor XIII is activated by thrombin and calcium ion to a transglutaminase that catalyzes the formation of gamma-glutamyl-epsilon-lysine cross-links between fibrin chains, thus stabilizing the fibrin clot. Also cross-link alpha-2-plasmin inhibitor, or fibronectin, to the alpha chains of fibrin. This Mus musculus (Mouse) protein is Coagulation factor XIII A chain (F13a1).